The sequence spans 366 residues: Ubiquitin carboxyl-terminal hydrolase 46 (366 aa).

The 331-residue stretch at phenylalanine 35–arginine 365 folds into the USP domain. Cysteine 44 functions as the Nucleophile in the catalytic mechanism. Zn(2+) is bound by residues cysteine 182, cysteine 185, cysteine 229, and cysteine 232. The active-site Proton acceptor is histidine 313.

Belongs to the peptidase C19 family. USP12/USP46 subfamily. In terms of assembly, interacts with WDR48. Interacts with WDR20. Interacts with DMWD. Component of the USP46/WDR20/WDR48 deubiquitinating complex. In terms of tissue distribution, broadly expressed.

Its subcellular location is the cytoplasm. It catalyses the reaction Thiol-dependent hydrolysis of ester, thioester, amide, peptide and isopeptide bonds formed by the C-terminal Gly of ubiquitin (a 76-residue protein attached to proteins as an intracellular targeting signal).. With respect to regulation, activated by interaction with WDR48. Its function is as follows. Deubiquitinating enzyme that plays a role in behavior, possibly by regulating GABA action. May act by mediating the deubiquitination of GAD1/GAD67. Has almost no deubiquitinating activity by itself and requires the interaction with WDR48 to have a high activity. Not involved in deubiquitination of monoubiquitinated FANCD2. The protein is Ubiquitin carboxyl-terminal hydrolase 46 (USP46) of Homo sapiens (Human).